The chain runs to 357 residues: Alanine racemase (357 aa).

Lys-33 (proton acceptor; specific for D-alanine) is an active-site residue. Lys-33 carries the post-translational modification N6-(pyridoxal phosphate)lysine. Residue Arg-129 participates in substrate binding. Catalysis depends on Tyr-253, which acts as the Proton acceptor; specific for L-alanine. Met-301 provides a ligand contact to substrate.

It belongs to the alanine racemase family. In terms of assembly, homodimer. Pyridoxal 5'-phosphate is required as a cofactor.

It carries out the reaction L-alanine = D-alanine. It participates in amino-acid biosynthesis; D-alanine biosynthesis; D-alanine from L-alanine: step 1/1. In terms of biological role, catalyzes the interconversion of L-alanine and D-alanine. Is highly specific for alanine as substrate. May serve both anabolic and catabolic purposes. The sequence is that of Alanine racemase from Pseudomonas taetrolens.